Here is a 213-residue protein sequence, read N- to C-terminus: Pyrrolidone-carboxylate peptidase (213 aa).

Residues E81, C144, and H166 contribute to the active site.

It belongs to the peptidase C15 family. In terms of assembly, homotetramer.

It localises to the cytoplasm. The catalysed reaction is Release of an N-terminal pyroglutamyl group from a polypeptide, the second amino acid generally not being Pro.. Functionally, removes 5-oxoproline from various penultimate amino acid residues except L-proline. This chain is Pyrrolidone-carboxylate peptidase, found in Pseudomonas fluorescens (strain SBW25).